The chain runs to 902 residues: HTH-type transcriptional regulator MalT (902 aa).

Position 39–46 (39–46 (SPAGYGKT)) interacts with ATP. The region spanning 832–897 (ELVRTSPLTQ…EAIVTAENLL (66 aa)) is the HTH luxR-type domain. The segment at residues 856-875 (NEQIAQELDVAGTTIKTHIR) is a DNA-binding region (H-T-H motif).

This sequence belongs to the MalT family. In terms of assembly, monomer in solution. Oligomerizes to an active state in the presence of the positive effectors ATP and maltotriose.

With respect to regulation, activated by ATP and maltotriose, which are both required for DNA binding. Positively regulates the transcription of the maltose regulon whose gene products are responsible for uptake and catabolism of malto-oligosaccharides. Specifically binds to the promoter region of its target genes, recognizing a short DNA motif called the MalT box. The protein is HTH-type transcriptional regulator MalT of Vibrio parahaemolyticus serotype O3:K6 (strain RIMD 2210633).